We begin with the raw amino-acid sequence, 1241 residues long: ATP-dependent helicase/nuclease subunit A (1241 aa).

Residues 12 to 485 (SQWTDDQWKA…IDLAKNFRSR (474 aa)) enclose the UvrD-like helicase ATP-binding domain. 33 to 40 (AAAGSGKT) serves as a coordination point for ATP. Positions 505 to 805 (GEIDYDADAE…RIMTIHKSKG (301 aa)) constitute a UvrD-like helicase C-terminal domain.

It belongs to the helicase family. AddA subfamily. Heterodimer of AddA and AddB/RexB. Requires Mg(2+) as cofactor.

It carries out the reaction Couples ATP hydrolysis with the unwinding of duplex DNA by translocating in the 3'-5' direction.. It catalyses the reaction ATP + H2O = ADP + phosphate + H(+). Functionally, the heterodimer acts as both an ATP-dependent DNA helicase and an ATP-dependent, dual-direction single-stranded exonuclease. Recognizes the chi site generating a DNA molecule suitable for the initiation of homologous recombination. The AddA nuclease domain is required for chi fragment generation; this subunit has the helicase and 3' -&gt; 5' nuclease activities. This Bacillus mycoides (strain KBAB4) (Bacillus weihenstephanensis) protein is ATP-dependent helicase/nuclease subunit A.